Reading from the N-terminus, the 287-residue chain is Cbb3-type cytochrome c oxidase subunit FixPc (287 aa).

At 1–36 the chain is on the cytoplasmic side; it reads MSEKHIDEFSGVETTGHEWDGIRELNNPMPRWWVWT. A helical transmembrane segment spans residues 37-57; it reads FYATIVWALGYAIAYPAIPMI. Over 58–287 the chain is Periplasmic; it reads TDATKGMLGF…IFVHSLGGGT (230 aa). Cytochrome c domains lie at 108-196 and 203-284; these read FAIA…WGLT and GLAE…HSLG. Residues cysteine 121, cysteine 124, histidine 125, methionine 173, cysteine 216, cysteine 219, histidine 220, and methionine 261 each contribute to the heme c site.

The protein belongs to the CcoP / FixP family. In terms of assembly, component of the cbb3-type cytochrome c oxidase at least composed of FixN, FixO, FixQ and FixP. Heme c is required as a cofactor.

Its subcellular location is the cell inner membrane. It functions in the pathway energy metabolism; oxidative phosphorylation. Its function is as follows. C-type cytochrome. Part of the cbb3-type cytochrome c oxidase complex. FixP subunit is required for transferring electrons from donor cytochrome c via its heme groups to FixO subunit. From there, electrons are shuttled to the catalytic binuclear center of FixN subunit where oxygen reduction takes place. The complex also functions as a proton pump. In Rhizobium leguminosarum bv. viciae, this protein is Cbb3-type cytochrome c oxidase subunit FixPc.